The chain runs to 1366 residues: MTSSKPKKTSRVRKTTKNSKKNNPLTMPALAKTPPSFKNKVVDKKALKNLVSWAYKTHGTAVTAAMADNLKDLGFKYATQAAVSISVDDLKVPEAKQDLIGQAEEQISATEECYRLGEITEVERHTKVIDTWTETNERLVDAVKNNFNQNDPLNSVWMMANSGARGNMSQVRQLVGMRGLMANPQGEIIDLPIRTNFREGLTVTEYVISSYGARKGLVDTALRTADSGYLTRRLVDVAQDVIVREEDCGTERSIVVEAEDGKFGARLLGRLTAEDIFDAEENLVVPQNTAIDPALSGEIEKASINKVKIRSPLTCEANRSVCRRCYGWALAHNHLVDLGEAVGIIAAQSIGEPGTQLTMRTFHTGGVSTAESGVVRSKITGKVEFSSKAKVRGYRTPHGVEAKQAEVDFILKIVPQGSNSGKPQKIEVSSGSLLFVEDGEEINSDITVAQIIAGTVKKSVEKATKDVICDLAGQVRYDKVIQPKEVTDRQGNITLKAQRLGRLWVLAGDVYNLPPNARPVISSGKSVDEGTVLAEASQSSEFGGQVRLRESVGDSREVQIVTTSMSLTNFKLIEESTHSGQIYNLESSDGISYRLNISPGSKISNGEVIADLTDERFRTKTGGLVKYAPGLSVKKARSSKNGFEVSQGGTLLWIPQETHEINKDISLLMIEDMKWIEAGTEVVKDIFSQTSGIVTVTQKNDILREITVRNGTFHECDDEEVLNRFTEEGNLVNPGEKILDGVDNKEILFVQKLETPKCRGLLLRTVEEFTIPDQAELPQLSHVKQEKGPHLGLKAIQRLTYKDGELIKSVEGVELLRTHLSIESFDATPQMTIDVESIEDKNDASINRLNLVILESILVRRDTLSDSSHGSTHTELQVKNDQLVKAGDVIATTQILCKEKGFVQLPNVVEDEPIRRLIVEREEDKIKIKISDKAVVKIGDRVVDGDPISKSVKSTSCGEIEEISNSSVTLRLGRPYMVSPDSVLHVKDGDLVLRGDGLALLVFERQKTGDIVQGLPRIEELLEARRPRDSAILSKKSGIVQIKKGNDEESVSLSVIEKDDFVNEYQLLIGKNIMVSDGQQVTGGESLTDGPINPHELLDCYFNDLKDQKPLIEAARESISKLQRSMVSEVQNVYKSQGVAIDDKHIEVIVRQMTSKVRIEDAGDTTLLPGELIELRQVEDTNQAMAITGGAPAEFTPVLLGITKASLNTDSFISAASFQETTRVLTEAAIEGKSDWLRGLKENVIIGRLIPAGTGFSGFVEELSSEAGPHPDILAEESGGYRRAQNLRPDYTVDMPQSPSVSSTAILDDPSDEDLETTRNRHGIDPSSSNFAAFARPNAENQFSEDQLPDPAALEGLQEEGLLSDE.

The span at methionine 1–lysine 20 shows a compositional bias: basic residues. Residues methionine 1–proline 34 form a disordered region. Residues cysteine 248, cysteine 315, cysteine 322, and cysteine 325 each contribute to the Zn(2+) site. Positions tyrosine 1291–glutamate 1366 are disordered. Residues methionine 1295 to alanine 1305 are compositionally biased toward polar residues. Residues leucine 1354 to glutamate 1366 show a composition bias toward low complexity.

This sequence belongs to the RNA polymerase beta' chain family. RpoC2 subfamily. As to quaternary structure, in cyanobacteria the RNAP catalytic core is composed of 2 alpha, 1 beta, 1 beta', 1 gamma and 1 omega subunit. When a sigma factor is associated with the core the holoenzyme is formed, which can initiate transcription. The cofactor is Zn(2+).

It carries out the reaction RNA(n) + a ribonucleoside 5'-triphosphate = RNA(n+1) + diphosphate. DNA-dependent RNA polymerase catalyzes the transcription of DNA into RNA using the four ribonucleoside triphosphates as substrates. This is DNA-directed RNA polymerase subunit beta' from Prochlorococcus marinus (strain MIT 9301).